The sequence spans 113 residues: uncharacterized protein (113 aa).

A helical membrane pass occupies residues 4-26; the sequence is VLFKIAVALLYLLSFFLHRLHLR. The segment at 32–74 is disordered; that stretch reads RRRRRRHHRRHHRRHHHHRRRRRRRRRRRRRHHRHHHHRHRRR.

The protein localises to the membrane. This is an uncharacterized protein from Saccharomyces cerevisiae (strain ATCC 204508 / S288c) (Baker's yeast).